The following is a 156-amino-acid chain: Endoribonuclease YbeY (156 aa).

3 residues coordinate Zn(2+): histidine 117, histidine 121, and histidine 127.

Belongs to the endoribonuclease YbeY family. Zn(2+) is required as a cofactor.

It is found in the cytoplasm. Its function is as follows. Single strand-specific metallo-endoribonuclease involved in late-stage 70S ribosome quality control and in maturation of the 3' terminus of the 16S rRNA. This chain is Endoribonuclease YbeY, found in Shewanella halifaxensis (strain HAW-EB4).